Here is a 689-residue protein sequence, read N- to C-terminus: Beta-adrenergic receptor kinase 1 (689 aa).

Residues 1 to 190 form an N-terminal region; that stretch reads MADLEAVLAD…ELNIHLTMND (190 aa). In terms of domain architecture, RGS spans 54–175; sequence TFEKIFSQKL…IESDKFTRFC (122 aa). The 263-residue stretch at 191–453 folds into the Protein kinase domain; the sequence is FSVHRIIGRG…AQEVKESPFF (263 aa). ATP contacts are provided by residues 197–205 and Lys-220; that span reads IGRGGFGEV. Residue Asp-317 is the Proton acceptor of the active site. The region spanning 454–521 is the AGC-kinase C-terminal domain; the sequence is RSLDWQMVFL…TISERWQQEV (68 aa). In terms of domain architecture, PH spans 558-652; the sequence is DCIMHGYMSK…WKKELRDAYR (95 aa). Phosphoserine is present on Ser-670.

This sequence belongs to the protein kinase superfamily. AGC Ser/Thr protein kinase family. GPRK subfamily. As to quaternary structure, interacts with the heterodimer formed by GNB1 and GNG2. Interacts with GIT1. Interacts with, and phosphorylates chemokine-stimulated CCR5. Interacts with ARRB1. Interacts with LPAR1 and LPAR2. Interacts with RALA in response to LPAR1 activation. ADRBK1 and RALA mutually inhibit each other's binding to LPAR1. Interacts with ADRB2.

The protein resides in the cytoplasm. It localises to the cell membrane. Its subcellular location is the postsynapse. The protein localises to the presynapse. It carries out the reaction [beta-adrenergic receptor] + ATP = [beta-adrenergic receptor]-phosphate + ADP + H(+). With respect to regulation, in contrast to other AGC family kinases, the catalytic activity is solely regulated by the binding of substrates and ligands, not by phosphorylation of the kinase domain. In terms of biological role, specifically phosphorylates the agonist-occupied form of the beta-adrenergic and closely related receptors, probably inducing a desensitization of them. Key regulator of LPAR1 signaling. Competes with RALA for binding to LPAR1 thus affecting the signaling properties of the receptor. Desensitizes LPAR1 and LPAR2 in a phosphorylation-independent manner. Positively regulates ciliary smoothened (SMO)-dependent Hedgehog (Hh) signaling pathway by facilitating the trafficking of SMO into the cilium and the stimulation of SMO activity. Inhibits relaxation of airway smooth muscle in response to blue light. The sequence is that of Beta-adrenergic receptor kinase 1 from Mesocricetus auratus (Golden hamster).